A 100-amino-acid polypeptide reads, in one-letter code: NADH-quinone oxidoreductase subunit K (100 aa).

A run of 3 helical transmembrane segments spans residues Ile2–Val22, Leu28–Val48, and Val60–Leu80.

Belongs to the complex I subunit 4L family. NDH-1 is composed of 13 different subunits. Subunits NuoA, H, J, K, L, M, N constitute the membrane sector of the complex.

It localises to the cell inner membrane. It catalyses the reaction a quinone + NADH + 5 H(+)(in) = a quinol + NAD(+) + 4 H(+)(out). Functionally, NDH-1 shuttles electrons from NADH, via FMN and iron-sulfur (Fe-S) centers, to quinones in the respiratory chain. The immediate electron acceptor for the enzyme in this species is believed to be ubiquinone. Couples the redox reaction to proton translocation (for every two electrons transferred, four hydrogen ions are translocated across the cytoplasmic membrane), and thus conserves the redox energy in a proton gradient. This is NADH-quinone oxidoreductase subunit K from Erwinia tasmaniensis (strain DSM 17950 / CFBP 7177 / CIP 109463 / NCPPB 4357 / Et1/99).